The sequence spans 295 residues: Protease HtpX (295 aa).

The next 2 membrane-spanning stretches (helical) occupy residues 4-24 and 41-61; these read ILLFVATNLAVVLVASITLSL and SSLLVFCAVFGFAGSLVSLFI. Residue His147 coordinates Zn(2+). Glu148 is an active-site residue. Position 151 (His151) interacts with Zn(2+). A run of 2 helical transmembrane segments spans residues 158–178 and 199–219; these read VTLALVQGVVNTFVMFFARII and VATIVAELVLGILASMIVMWF. Glu224 provides a ligand contact to Zn(2+).

It belongs to the peptidase M48B family. The cofactor is Zn(2+).

The protein localises to the cell inner membrane. This Pseudomonas putida (strain W619) protein is Protease HtpX.